The following is a 189-amino-acid chain: ATP synthase subunit delta (189 aa).

Belongs to the ATPase delta chain family. In terms of assembly, F-type ATPases have 2 components, F(1) - the catalytic core - and F(0) - the membrane proton channel. F(1) has five subunits: alpha(3), beta(3), gamma(1), delta(1), epsilon(1). F(0) has three main subunits: a(1), b(2) and c(10-14). The alpha and beta chains form an alternating ring which encloses part of the gamma chain. F(1) is attached to F(0) by a central stalk formed by the gamma and epsilon chains, while a peripheral stalk is formed by the delta and b chains.

Its subcellular location is the cell inner membrane. Functionally, f(1)F(0) ATP synthase produces ATP from ADP in the presence of a proton or sodium gradient. F-type ATPases consist of two structural domains, F(1) containing the extramembraneous catalytic core and F(0) containing the membrane proton channel, linked together by a central stalk and a peripheral stalk. During catalysis, ATP synthesis in the catalytic domain of F(1) is coupled via a rotary mechanism of the central stalk subunits to proton translocation. Its function is as follows. This protein is part of the stalk that links CF(0) to CF(1). It either transmits conformational changes from CF(0) to CF(1) or is implicated in proton conduction. This is ATP synthase subunit delta from Ehrlichia ruminantium (strain Gardel).